Consider the following 239-residue polypeptide: Ribonuclease 3 (239 aa).

The region spanning 11-133 (HTAIQKKLGY…MFAAVSFDAD (123 aa)) is the RNase III domain. Glu46 serves as a coordination point for Mg(2+). Asp50 is a catalytic residue. Mg(2+) is bound by residues Asp119 and Glu122. The active site involves Glu122. A DRBM domain is found at 160 to 230 (DGKTALQEAL…AKEALKWLEE (71 aa)).

The protein belongs to the ribonuclease III family. As to quaternary structure, homodimer. Mg(2+) is required as a cofactor.

It localises to the cytoplasm. It catalyses the reaction Endonucleolytic cleavage to 5'-phosphomonoester.. Functionally, digests double-stranded RNA. Involved in the processing of primary rRNA transcript to yield the immediate precursors to the large and small rRNAs (23S and 16S). Processes some mRNAs, and tRNAs when they are encoded in the rRNA operon. Processes pre-crRNA and tracrRNA of type II CRISPR loci if present in the organism. The chain is Ribonuclease 3 from Neisseria gonorrhoeae (strain ATCC 700825 / FA 1090).